The primary structure comprises 343 residues: Holliday junction branch migration complex subunit RuvB (343 aa).

The large ATPase domain (RuvB-L) stretch occupies residues 1–182; it reads MRDELLNTPT…FGISNRLDYY (182 aa). ATP is bound by residues Ile21, Arg22, Gly63, Lys66, Thr67, Thr68, 129 to 131, Arg172, Tyr182, and Arg219; that span reads EDF. Thr67 contacts Mg(2+). The small ATPAse domain (RuvB-S) stretch occupies residues 183-253; that stretch reads SAELLQRIII…LARKTLAALE (71 aa). Residues 256–343 are head domain (RuvB-H); sequence EDGLDDMDKK…DGPLFQKGSS (88 aa). Residues Arg311 and Arg316 each coordinate DNA.

Belongs to the RuvB family. Homohexamer. Forms an RuvA(8)-RuvB(12)-Holliday junction (HJ) complex. HJ DNA is sandwiched between 2 RuvA tetramers; dsDNA enters through RuvA and exits via RuvB. An RuvB hexamer assembles on each DNA strand where it exits the tetramer. Each RuvB hexamer is contacted by two RuvA subunits (via domain III) on 2 adjacent RuvB subunits; this complex drives branch migration. In the full resolvosome a probable DNA-RuvA(4)-RuvB(12)-RuvC(2) complex forms which resolves the HJ.

It localises to the cytoplasm. It carries out the reaction ATP + H2O = ADP + phosphate + H(+). Its function is as follows. The RuvA-RuvB-RuvC complex processes Holliday junction (HJ) DNA during genetic recombination and DNA repair, while the RuvA-RuvB complex plays an important role in the rescue of blocked DNA replication forks via replication fork reversal (RFR). RuvA specifically binds to HJ cruciform DNA, conferring on it an open structure. The RuvB hexamer acts as an ATP-dependent pump, pulling dsDNA into and through the RuvAB complex. RuvB forms 2 homohexamers on either side of HJ DNA bound by 1 or 2 RuvA tetramers; 4 subunits per hexamer contact DNA at a time. Coordinated motions by a converter formed by DNA-disengaged RuvB subunits stimulates ATP hydrolysis and nucleotide exchange. Immobilization of the converter enables RuvB to convert the ATP-contained energy into a lever motion, pulling 2 nucleotides of DNA out of the RuvA tetramer per ATP hydrolyzed, thus driving DNA branch migration. The RuvB motors rotate together with the DNA substrate, which together with the progressing nucleotide cycle form the mechanistic basis for DNA recombination by continuous HJ branch migration. Branch migration allows RuvC to scan DNA until it finds its consensus sequence, where it cleaves and resolves cruciform DNA. The chain is Holliday junction branch migration complex subunit RuvB from Prosthecochloris aestuarii (strain DSM 271 / SK 413).